We begin with the raw amino-acid sequence, 60 residues long: Metallothionein (60 aa).

The interval 1-28 (MDCACATGGSCSCAGSCKCENCKCTSCK) is beta. Residues Cys-3, Cys-5, Cys-11, Cys-13, Cys-17, Cys-19, Cys-22, Cys-24, Cys-27, Cys-31, Cys-32, Cys-34, Cys-35, Cys-39, Cys-42, Cys-46, Cys-48, Cys-56, Cys-58, and Cys-59 each coordinate a divalent metal cation. Residues 29 to 60 (KSCCSCCPSECEKCGQGCVCKGGSSEKCSCCN) are alpha.

Belongs to the metallothionein superfamily. Type 1 family.

Functionally, metallothioneins have a high content of cysteine residues that bind various heavy metals. The sequence is that of Metallothionein (MT-A) from Ambystoma mexicanum (Axolotl).